A 290-amino-acid polypeptide reads, in one-letter code: Protein-lysine methyltransferase METTL21E (290 aa).

Residues Trp96, 124–126, Asp145, Trp176, and Ala197 each bind S-adenosyl-L-methionine; that span reads GAG.

The protein belongs to the methyltransferase superfamily. METTL21 family.

Its function is as follows. Protein-lysine methyltransferase. The chain is Protein-lysine methyltransferase METTL21E (METTL21E) from Bos taurus (Bovine).